The primary structure comprises 409 residues: Formyl-CoA:oxalate CoA-transferase (409 aa).

CoA contacts are provided by residues 17-18 (QS), 71-74 (LNTK), 95-97 (NFG), Arg103, and 135-138 (KAYE). Catalysis depends on Asp167, which acts as the Nucleophile. The interval 221 to 245 (LAEYPNDDFGDEVPRSGNASGGGQP) is disordered. Substrate is bound at residue 242–244 (GGQ).

It belongs to the CoA-transferase III family. Frc subfamily. Homodimer.

It catalyses the reaction formyl-CoA + oxalate = oxalyl-CoA + formate. Its pathway is metabolic intermediate degradation; oxalate degradation; CO(2) and formate from oxalate: step 1/2. In terms of biological role, involved in the catabolism of oxalate and in the adapatation to low pH via the induction of the oxalate-dependent acid tolerance response (ATR). Catalyzes the transfer of the CoA moiety from formyl-CoA to oxalate. This Streptomyces avermitilis (strain ATCC 31267 / DSM 46492 / JCM 5070 / NBRC 14893 / NCIMB 12804 / NRRL 8165 / MA-4680) protein is Formyl-CoA:oxalate CoA-transferase.